Reading from the N-terminus, the 143-residue chain is Deoxyuridine 5'-triphosphate nucleotidohydrolase (143 aa).

Substrate is bound by residues 62–64 (RSG), asparagine 75, and 79–81 (TID).

It belongs to the dUTPase family. Requires Mg(2+) as cofactor.

It carries out the reaction dUTP + H2O = dUMP + diphosphate + H(+). It participates in pyrimidine metabolism; dUMP biosynthesis; dUMP from dCTP (dUTP route): step 2/2. In terms of biological role, this enzyme is involved in nucleotide metabolism: it produces dUMP, the immediate precursor of thymidine nucleotides and it decreases the intracellular concentration of dUTP so that uracil cannot be incorporated into DNA. The sequence is that of Deoxyuridine 5'-triphosphate nucleotidohydrolase from Acaryochloris marina (strain MBIC 11017).